A 138-amino-acid chain; its full sequence is Nucleoside diphosphate kinase (138 aa).

The ATP site is built by K9, F57, R85, T91, R102, and N112. H115 (pros-phosphohistidine intermediate) is an active-site residue.

The protein belongs to the NDK family. As to quaternary structure, homotetramer. Mg(2+) is required as a cofactor.

It localises to the cytoplasm. The catalysed reaction is a 2'-deoxyribonucleoside 5'-diphosphate + ATP = a 2'-deoxyribonucleoside 5'-triphosphate + ADP. The enzyme catalyses a ribonucleoside 5'-diphosphate + ATP = a ribonucleoside 5'-triphosphate + ADP. Its function is as follows. Major role in the synthesis of nucleoside triphosphates other than ATP. The ATP gamma phosphate is transferred to the NDP beta phosphate via a ping-pong mechanism, using a phosphorylated active-site intermediate. The protein is Nucleoside diphosphate kinase of Exiguobacterium sibiricum (strain DSM 17290 / CCUG 55495 / CIP 109462 / JCM 13490 / 255-15).